Reading from the N-terminus, the 195-residue chain is Thymidine kinase (195 aa).

Residues 15 to 22 (GSMFSGKT) and 91 to 94 (DEAN) contribute to the ATP site. Residue E92 is the Proton acceptor of the active site. 4 residues coordinate Zn(2+): C148, C151, C186, and C189.

It belongs to the thymidine kinase family. In terms of assembly, homotetramer.

It localises to the cytoplasm. It carries out the reaction thymidine + ATP = dTMP + ADP + H(+). The polypeptide is Thymidine kinase (Halobacterium salinarum (strain ATCC 29341 / DSM 671 / R1)).